The sequence spans 130 residues: S-adenosylmethionine decarboxylase proenzyme (130 aa).

The active-site Schiff-base intermediate with substrate; via pyruvic acid is Ser-64. At Ser-64 the chain carries Pyruvic acid (Ser); by autocatalysis. His-69 acts as the Proton acceptor; for processing activity in catalysis. The active-site Proton donor; for catalytic activity is the Cys-84.

Belongs to the prokaryotic AdoMetDC family. Type 1 subfamily. Heterotetramer of two alpha and two beta chains arranged as a dimer of alpha/beta heterodimers. Pyruvate serves as cofactor. Post-translationally, is synthesized initially as an inactive proenzyme. Formation of the active enzyme involves a self-maturation process in which the active site pyruvoyl group is generated from an internal serine residue via an autocatalytic post-translational modification. Two non-identical subunits are generated from the proenzyme in this reaction, and the pyruvate is formed at the N-terminus of the alpha chain, which is derived from the carboxyl end of the proenzyme. The post-translation cleavage follows an unusual pathway, termed non-hydrolytic serinolysis, in which the side chain hydroxyl group of the serine supplies its oxygen atom to form the C-terminus of the beta chain, while the remainder of the serine residue undergoes an oxidative deamination to produce ammonia and the pyruvoyl group blocking the N-terminus of the alpha chain.

The catalysed reaction is S-adenosyl-L-methionine + H(+) = S-adenosyl 3-(methylsulfanyl)propylamine + CO2. It participates in amine and polyamine biosynthesis; S-adenosylmethioninamine biosynthesis; S-adenosylmethioninamine from S-adenosyl-L-methionine: step 1/1. Catalyzes the decarboxylation of S-adenosylmethionine to S-adenosylmethioninamine (dcAdoMet), the propylamine donor required for the synthesis of the polyamines spermine and spermidine from the diamine putrescine. The polypeptide is S-adenosylmethionine decarboxylase proenzyme (Picrophilus torridus (strain ATCC 700027 / DSM 9790 / JCM 10055 / NBRC 100828 / KAW 2/3)).